The primary structure comprises 83 residues: NAD(P)H-quinone oxidoreductase subunit L (83 aa).

A run of 2 helical transmembrane segments spans residues 15–35 (LMVLAAYVLLGGLYLIVVPLL) and 53–73 (LSAYGMVFLFFPGLILFAPFL).

It belongs to the complex I NdhL subunit family. As to quaternary structure, NDH-1 can be composed of about 15 different subunits; different subcomplexes with different compositions have been identified which probably have different functions.

It is found in the cellular thylakoid membrane. It catalyses the reaction a plastoquinone + NADH + (n+1) H(+)(in) = a plastoquinol + NAD(+) + n H(+)(out). The enzyme catalyses a plastoquinone + NADPH + (n+1) H(+)(in) = a plastoquinol + NADP(+) + n H(+)(out). Functionally, NDH-1 shuttles electrons from an unknown electron donor, via FMN and iron-sulfur (Fe-S) centers, to quinones in the respiratory and/or the photosynthetic chain. The immediate electron acceptor for the enzyme in this species is believed to be plastoquinone. Couples the redox reaction to proton translocation, and thus conserves the redox energy in a proton gradient. Cyanobacterial NDH-1 also plays a role in inorganic carbon-concentration. In Prochlorococcus marinus (strain MIT 9303), this protein is NAD(P)H-quinone oxidoreductase subunit L.